The chain runs to 354 residues: uncharacterized protein (354 aa).

The signal sequence occupies residues Met1 to Ala21. Cys22 carries N-palmitoyl cysteine lipidation. The S-diacylglycerol cysteine moiety is linked to residue Cys22.

The protein localises to the cell membrane. Its subcellular location is the membrane raft. This is an uncharacterized protein from Bacillus subtilis (strain 168).